Reading from the N-terminus, the 358-residue chain is 3-isopropylmalate dehydrogenase 2 (358 aa).

Gly-74 to Glu-87 is a binding site for NAD(+). Arg-94, Arg-104, Arg-132, and Asp-221 together coordinate substrate. The Mg(2+) site is built by Asp-221, Asp-245, and Asp-249. Position 279–291 (Gly-279–Asn-291) interacts with NAD(+).

This sequence belongs to the isocitrate and isopropylmalate dehydrogenases family. LeuB type 1 subfamily. Homodimer. Requires Mg(2+) as cofactor. It depends on Mn(2+) as a cofactor.

The protein localises to the cytoplasm. The catalysed reaction is (2R,3S)-3-isopropylmalate + NAD(+) = 4-methyl-2-oxopentanoate + CO2 + NADH. The protein operates within amino-acid biosynthesis; L-leucine biosynthesis; L-leucine from 3-methyl-2-oxobutanoate: step 3/4. Its function is as follows. Catalyzes the oxidation of 3-carboxy-2-hydroxy-4-methylpentanoate (3-isopropylmalate) to 3-carboxy-4-methyl-2-oxopentanoate. The product decarboxylates to 4-methyl-2 oxopentanoate. The protein is 3-isopropylmalate dehydrogenase 2 of Dechloromonas aromatica (strain RCB).